Consider the following 110-residue polypeptide: Small ribosomal subunit protein uS17 (110 aa).

This sequence belongs to the universal ribosomal protein uS17 family. Part of the 30S ribosomal subunit.

Functionally, one of the primary rRNA binding proteins, it binds specifically to the 5'-end of 16S ribosomal RNA. The polypeptide is Small ribosomal subunit protein uS17 (Haloquadratum walsbyi (strain DSM 16790 / HBSQ001)).